We begin with the raw amino-acid sequence, 493 residues long: Lysine--tRNA ligase (493 aa).

The short motif at 26-34 (PSGHIHLGN) is the 'HIGH' region element. The 'KMSKS' region signature appears at 270-274 (AMKSS).

This sequence belongs to the class-I aminoacyl-tRNA synthetase family.

It is found in the cytoplasm. The catalysed reaction is tRNA(Lys) + L-lysine + ATP = L-lysyl-tRNA(Lys) + AMP + diphosphate. The polypeptide is Lysine--tRNA ligase (lysS) (Archaeoglobus fulgidus (strain ATCC 49558 / DSM 4304 / JCM 9628 / NBRC 100126 / VC-16)).